Here is a 1244-residue protein sequence, read N- to C-terminus: ATP-dependent RNA helicase DHX8 (1244 aa).

Residue K140 forms a Glycyl lysine isopeptide (Lys-Gly) (interchain with G-Cter in SUMO2) linkage. Disordered regions lie at residues 152–289 (LMPS…PAIG) and 361–396 (DVDQ…RPTH). Residues 160 to 169 (EKQRDPEHRD) are compositionally biased toward basic and acidic residues. The span at 170-179 (RTKKKKRSRS) shows a compositional bias: basic residues. The segment covering 180–220 (RDRDRDRDRDRDRDRDRDRDRDKDRERDRDRERDRERDRER) has biased composition (basic and acidic residues). Residues 221 to 234 (DHKRRHRSRSRSHS) show a composition bias toward basic residues. Residues 256 to 283 (FKDRKDREKYGERNLDRWRDKHVDRPPP) show a composition bias toward basic and acidic residues. One can recognise an S1 motif domain in the interval 289–360 (GDIYNGKVTS…TGTKTSLSMK (72 aa)). Over residues 386 to 395 (TSMRNPDRPT) the composition is skewed to basic and acidic residues. S419 carries the post-translational modification Phosphoserine. K423 is covalently cross-linked (Glycyl lysine isopeptide (Lys-Gly) (interchain with G-Cter in SUMO2)). The residue at position 484 (S484) is a Phosphoserine. In terms of domain architecture, Helicase ATP-binding spans 599 to 762 (VQAVHDNQIL…FYEAPIFTIP (164 aa)). 612-619 (GETGSGKT) contributes to the ATP binding site. Residues 709 to 712 (DEAH) carry the DEAH box motif. The 181-residue stretch at 780-960 (YLDASLITVM…STVLSLKAMG (181 aa)) folds into the Helicase C-terminal domain.

It belongs to the DEAD box helicase family. DEAH subfamily. DDX8/PRP22 sub-subfamily. Identified in the spliceosome C complex. Interacts with ARRB2; the interaction is detected in the nucleus upon OR1D2 stimulation. Interacts with SRRM2. Interacts with CACTIN.

It is found in the nucleus. It carries out the reaction ATP + H2O = ADP + phosphate + H(+). Functionally, involved in pre-mRNA splicing as component of the spliceosome. Facilitates nuclear export of spliced mRNA by releasing the RNA from the spliceosome. This Mus musculus (Mouse) protein is ATP-dependent RNA helicase DHX8 (Dhx8).